The following is a 99-amino-acid chain: uncharacterized protein (99 aa).

A signal peptide spans 1 to 17 (MMMNSFFPAMALMVLVG). Cysteine 18 carries N-palmitoyl cysteine lipidation. Residue cysteine 18 is the site of S-diacylglycerol cysteine attachment.

The protein resides in the cell membrane. This is an uncharacterized protein from Escherichia coli O157:H7.